We begin with the raw amino-acid sequence, 56 residues long: Large ribosomal subunit protein bL32 (56 aa).

The interval 1 to 21 (MAVQQNRKTRSRRGMRRSHDA) is disordered. The span at 7–16 (RKTRSRRGMR) shows a compositional bias: basic residues.

It belongs to the bacterial ribosomal protein bL32 family.

This chain is Large ribosomal subunit protein bL32, found in Vibrio cholerae serotype O1 (strain ATCC 39541 / Classical Ogawa 395 / O395).